The following is a 236-amino-acid chain: Ribose-5-phosphate isomerase A (236 aa).

Residues 29–32 (SGST), 86–89 (DGAD), and 99–102 (KGGG) contribute to the substrate site. Residue glutamate 108 is the Proton acceptor of the active site. A substrate-binding site is contributed by lysine 126.

This sequence belongs to the ribose 5-phosphate isomerase family. Homodimer.

The catalysed reaction is aldehydo-D-ribose 5-phosphate = D-ribulose 5-phosphate. It participates in carbohydrate degradation; pentose phosphate pathway; D-ribose 5-phosphate from D-ribulose 5-phosphate (non-oxidative stage): step 1/1. Catalyzes the reversible conversion of ribose-5-phosphate to ribulose 5-phosphate. The sequence is that of Ribose-5-phosphate isomerase A from Prochlorococcus marinus (strain NATL2A).